The chain runs to 318 residues: O-glucosyltransferase LpsA (318 aa).

It belongs to the glycosyltransferase 90 family.

The protein operates within protein modification; protein glycosylation. In terms of biological role, involved in lipopolysaccharide core biosynthesis. This Dichelobacter nodosus (Bacteroides nodosus) protein is O-glucosyltransferase LpsA (lpsA).